A 1138-amino-acid chain; its full sequence is Pesticidal crystal protein Cry7Ab (1138 aa).

The protein belongs to the delta endotoxin family.

Functionally, promotes colloidosmotic lysis by binding to the midgut epithelial cells of Coleoptera. The polypeptide is Pesticidal crystal protein Cry7Ab (cry7Ab) (Bacillus thuringiensis serovar kumamotoensis).